Reading from the N-terminus, the 132-residue chain is Small ribosomal subunit protein uS8 (132 aa).

This sequence belongs to the universal ribosomal protein uS8 family. Part of the 30S ribosomal subunit. Contacts proteins S5 and S12.

Functionally, one of the primary rRNA binding proteins, it binds directly to 16S rRNA central domain where it helps coordinate assembly of the platform of the 30S subunit. The chain is Small ribosomal subunit protein uS8 from Caldicellulosiruptor bescii (strain ATCC BAA-1888 / DSM 6725 / KCTC 15123 / Z-1320) (Anaerocellum thermophilum).